The primary structure comprises 163 residues: NADH-quinone oxidoreductase subunit I (163 aa).

4Fe-4S ferredoxin-type domains follow at residues 53-83 and 94-123; these read LRRY…IEAG and VRYD…EGPN. Residues Cys63, Cys66, Cys69, Cys73, Cys103, Cys106, Cys109, and Cys113 each contribute to the [4Fe-4S] cluster site.

This sequence belongs to the complex I 23 kDa subunit family. As to quaternary structure, NDH-1 is composed of 14 different subunits. Subunits NuoA, H, J, K, L, M, N constitute the membrane sector of the complex. Requires [4Fe-4S] cluster as cofactor.

It localises to the cell inner membrane. The enzyme catalyses a quinone + NADH + 5 H(+)(in) = a quinol + NAD(+) + 4 H(+)(out). NDH-1 shuttles electrons from NADH, via FMN and iron-sulfur (Fe-S) centers, to quinones in the respiratory chain. The immediate electron acceptor for the enzyme in this species is believed to be ubiquinone. Couples the redox reaction to proton translocation (for every two electrons transferred, four hydrogen ions are translocated across the cytoplasmic membrane), and thus conserves the redox energy in a proton gradient. The sequence is that of NADH-quinone oxidoreductase subunit I from Brucella canis (strain ATCC 23365 / NCTC 10854 / RM-666).